A 75-amino-acid polypeptide reads, in one-letter code: DNA-directed RNA polymerase subunit Rpo5 (75 aa).

This sequence belongs to the archaeal Rpo5/eukaryotic RPB5 RNA polymerase subunit family. As to quaternary structure, part of the RNA polymerase complex.

Its subcellular location is the cytoplasm. The catalysed reaction is RNA(n) + a ribonucleoside 5'-triphosphate = RNA(n+1) + diphosphate. Its function is as follows. DNA-dependent RNA polymerase (RNAP) catalyzes the transcription of DNA into RNA using the four ribonucleoside triphosphates as substrates. The polypeptide is DNA-directed RNA polymerase subunit Rpo5 (Pyrobaculum aerophilum (strain ATCC 51768 / DSM 7523 / JCM 9630 / CIP 104966 / NBRC 100827 / IM2)).